We begin with the raw amino-acid sequence, 228 residues long: DNA mismatch repair protein MutH (228 aa).

The protein belongs to the MutH family.

The protein resides in the cytoplasm. Its function is as follows. Sequence-specific endonuclease that cleaves unmethylated GATC sequences. It is involved in DNA mismatch repair. The protein is DNA mismatch repair protein MutH of Yersinia pseudotuberculosis serotype IB (strain PB1/+).